The primary structure comprises 514 residues: Adenylosuccinate synthetase 1, chloroplastic (514 aa).

A chloroplast-targeting transit peptide spans 1–73 (MAMAAAAAVA…AQAIERESVK (73 aa)). GTP is bound by residues 100–106 (GDEGKGK) and 128–130 (GHT). D101 functions as the Proton acceptor in the catalytic mechanism. Mg(2+) contacts are provided by D101 and G128. IMP contacts are provided by residues 101-104 (DEGK), 126-129 (NAGH), T218, R232, Q312, T327, and R391. The Proton donor role is filled by H129. 387-393 (TTTGRPR) provides a ligand contact to substrate. GTP-binding positions include R393, 419–421 (KLD), and 502–504 (GVG).

The protein belongs to the adenylosuccinate synthetase family. In terms of assembly, homodimer. Mg(2+) is required as a cofactor.

Its subcellular location is the plastid. The protein localises to the chloroplast. It catalyses the reaction IMP + L-aspartate + GTP = N(6)-(1,2-dicarboxyethyl)-AMP + GDP + phosphate + 2 H(+). It functions in the pathway purine metabolism; AMP biosynthesis via de novo pathway; AMP from IMP: step 1/2. In terms of biological role, plays an important role in the de novo pathway and in the salvage pathway of purine nucleotide biosynthesis. Catalyzes the first committed step in the biosynthesis of AMP from IMP. The chain is Adenylosuccinate synthetase 1, chloroplastic from Physcomitrium patens (Spreading-leaved earth moss).